The primary structure comprises 193 residues: UPF0301 protein SAV_5129 (193 aa).

The protein belongs to the UPF0301 (AlgH) family.

This chain is UPF0301 protein SAV_5129, found in Streptomyces avermitilis (strain ATCC 31267 / DSM 46492 / JCM 5070 / NBRC 14893 / NCIMB 12804 / NRRL 8165 / MA-4680).